We begin with the raw amino-acid sequence, 203 residues long: Nudix hydrolase 12, mitochondrial (203 aa).

Residues 18-166 form the Nudix hydrolase domain; the sequence is NFRLVSGCIP…WMQRALEEFL (149 aa). Positions 66–87 match the Nudix box motif; sequence GGWEDDETVLEAASREAIEEAG. Mg(2+) is bound by residues Glu-81 and Glu-85.

The protein belongs to the Nudix hydrolase family. The cofactor is Mg(2+). Requires Mn(2+) as cofactor. In terms of tissue distribution, expressed in roots, leaves, stems and inflorescences.

The protein resides in the mitochondrion. Probably mediates the hydrolysis of some nucleoside diphosphate derivatives. The sequence is that of Nudix hydrolase 12, mitochondrial (NUDT12) from Arabidopsis thaliana (Mouse-ear cress).